Here is a 245-residue protein sequence, read N- to C-terminus: Type II restriction enzyme EcoRV (245 aa).

Mg(2+) is bound by residues Glu45, Asp74, and Asp90. Active-site residues include Asp74, Asp90, and Lys92.

In terms of assembly, homodimer. It depends on Mg(2+) as a cofactor.

The enzyme catalyses Endonucleolytic cleavage of DNA to give specific double-stranded fragments with terminal 5'-phosphates.. In terms of biological role, a P subtype restriction enzyme that recognizes the double-stranded sequence 5'-GATATC-3' and cleaves after T-3. The chain is Type II restriction enzyme EcoRV (ecoRVR) from Escherichia coli.